The primary structure comprises 272 residues: MNRIALGLHYDGAAFSGWQSQPHRNTVQDHLENAIERFAGVRLLTTVAGRTDTGVHALGQVIHLDTALEREPFSWVRGVNAFLPPSIALQWALPVDQGFHARFLAFERMYYYALYTGPHRVPLVHGRAGYQMLPPGQRLDVDAMREAAACLLGEHDFSAFRAAECQAKSPVKTMYDVTIRDDGNWVFLRFRASAFLHHMVRNLMGCLVAVGRGRYPAHWLAQVLAGRERKLAAPTFMPDGLYLVGVKYPDPYQIPAADPSASLFHGVFDDAA.

Residue aspartate 52 is the Nucleophile of the active site. Tyrosine 110 contributes to the substrate binding site.

The protein belongs to the tRNA pseudouridine synthase TruA family. In terms of assembly, homodimer.

It catalyses the reaction uridine(38/39/40) in tRNA = pseudouridine(38/39/40) in tRNA. Its function is as follows. Formation of pseudouridine at positions 38, 39 and 40 in the anticodon stem and loop of transfer RNAs. The polypeptide is tRNA pseudouridine synthase A (Cupriavidus necator (strain ATCC 17699 / DSM 428 / KCTC 22496 / NCIMB 10442 / H16 / Stanier 337) (Ralstonia eutropha)).